We begin with the raw amino-acid sequence, 246 residues long: Small ribosomal subunit protein uS2 (246 aa).

The protein belongs to the universal ribosomal protein uS2 family.

This is Small ribosomal subunit protein uS2 from Exiguobacterium sp. (strain ATCC BAA-1283 / AT1b).